Reading from the N-terminus, the 334-residue chain is Heat-inducible transcription repressor HrcA (334 aa).

This sequence belongs to the HrcA family.

In terms of biological role, negative regulator of class I heat shock genes (grpE-dnaK-dnaJ and groELS operons). Prevents heat-shock induction of these operons. This Verminephrobacter eiseniae (strain EF01-2) protein is Heat-inducible transcription repressor HrcA.